The chain runs to 703 residues: Stonustoxin subunit alpha (703 aa).

The tract at residues 2–265 (SSDLVMPALG…KAQQLIQEIN (264 aa)) is structural MACPF/CDC pore-forming domain. A structural FAT domain region spans residues 266 to 385 (VSKVRRIHTT…GMVEGTQAKF (120 aa)). Residues 386 to 517 (VSNQTELDRE…PRMPFVQGYK (132 aa)) are thioredoxin (THX) domain. The region spanning 508–703 (PRMPFVQGYK…AGNHGTLRLL (196 aa)) is the B30.2/SPRY domain.

The protein belongs to the SNTX/VTX toxin family. Heterodimer of alpha and beta subunits; non-covalently linked. Post-translationally, intrachain disulfide bonds may be present in the heterodimer. Not glycosylated. As to expression, expressed by the venom gland.

The protein localises to the secreted. This lethal (towards mammals) heterodimer induces hemolytic activities due to its ability to form pores in the cell membrane. The pore may be composed of 10 SNTX-alpha/beta heterodimers. The toxin elicits potent hypotension which is endothelium-dependent and appears to be mediated by the nitric oxide pathway and activation of potassium channels. In addition, it displays edema-inducing activities, increases vascular permeability. It also shows myotoxic activities and interferes irreversibly with neuromuscular function. It also induces irreversible platelet aggregation in rabbit or rat (but not in human or mouse) whole blood. In addition, it has been observed to increase spontaneous quantal acetylcholine release from isolated frog cutaneous pectoris motor endings. This chain is Stonustoxin subunit alpha, found in Synanceia horrida (Estuarine stonefish).